The chain runs to 532 residues: Glucose-6-phosphate isomerase (532 aa).

The Proton donor role is filled by E330. Residues H359 and K460 contribute to the active site.

The protein belongs to the GPI family.

The protein localises to the cytoplasm. The enzyme catalyses alpha-D-glucose 6-phosphate = beta-D-fructose 6-phosphate. Its pathway is carbohydrate biosynthesis; gluconeogenesis. The protein operates within carbohydrate degradation; glycolysis; D-glyceraldehyde 3-phosphate and glycerone phosphate from D-glucose: step 2/4. Catalyzes the reversible isomerization of glucose-6-phosphate to fructose-6-phosphate. The polypeptide is Glucose-6-phosphate isomerase (Prochlorococcus marinus (strain MIT 9211)).